The following is a 191-amino-acid chain: NAD(P)H dehydrogenase (quinone) (191 aa).

The Flavodoxin-like domain maps to 4–184 (ILVIFHSITG…VAKMLGKRVA (181 aa)). FMN contacts are provided by residues 10–15 (SITGNT), 83–85 (TRF), and 118–124 (SNEMPHG).

This sequence belongs to the WrbA family. As to quaternary structure, homodimer and homotetramer; in equilibrium. FMN is required as a cofactor.

The enzyme catalyses a quinone + NADH + H(+) = a quinol + NAD(+). It carries out the reaction a quinone + NADPH + H(+) = a quinol + NADP(+). Its function is as follows. It seems to function in response to environmental stress when various electron transfer chains are affected or when the environment is highly oxidizing. It reduces quinones to the hydroquinone state to prevent interaction of the semiquinone with O2 and production of superoxide. It prefers NADH over NADPH. The protein is NAD(P)H dehydrogenase (quinone) of Archaeoglobus fulgidus (strain ATCC 49558 / DSM 4304 / JCM 9628 / NBRC 100126 / VC-16).